Reading from the N-terminus, the 37-residue chain is Turripeptide Lol6.2 (37 aa).

Cystine bridges form between C4–C16, C8–C21, and C15–C29.

Expressed by the venom duct.

Its subcellular location is the secreted. Functionally, acts as a neurotoxin by inhibiting an ion channel. This Iotyrris olangoensis (Sea snail) protein is Turripeptide Lol6.2.